The primary structure comprises 247 residues: MSKLFWATLSFISRLPVPSRWAQGLDFEQYSRGIVMFPLIGAILGGLSGLIFILLQPWCGIPLAALFCILALALLTGGFHLDGLADTCDGIFSARRRERMLEIMRDSRLGTHGGLALIFVLLAKILVVSELALRGTPVLAALAAACAAGRGSAALLMYRHRYAREEGLGNVFIGKVSGRQTCVTLGLAAIITTVLLPGMQGLAAIVITLAAIFILGQLLKRTLGGQTGDTLGAAIELGELIFLLALL.

5 consecutive transmembrane segments (helical) span residues 34–54 (IVMF…IFIL), 59–79 (CGIP…TGGF), 113–133 (GGLA…ELAL), 138–158 (VLAA…LLMY), and 194–214 (VLLP…AIFI).

The protein belongs to the CobS family. Mg(2+) serves as cofactor.

It is found in the cell inner membrane. The catalysed reaction is alpha-ribazole + adenosylcob(III)inamide-GDP = adenosylcob(III)alamin + GMP + H(+). It carries out the reaction alpha-ribazole 5'-phosphate + adenosylcob(III)inamide-GDP = adenosylcob(III)alamin 5'-phosphate + GMP + H(+). It participates in cofactor biosynthesis; adenosylcobalamin biosynthesis; adenosylcobalamin from cob(II)yrinate a,c-diamide: step 7/7. Functionally, joins adenosylcobinamide-GDP and alpha-ribazole to generate adenosylcobalamin (Ado-cobalamin). Also synthesizes adenosylcobalamin 5'-phosphate from adenosylcobinamide-GDP and alpha-ribazole 5'-phosphate. This Salmonella arizonae (strain ATCC BAA-731 / CDC346-86 / RSK2980) protein is Adenosylcobinamide-GDP ribazoletransferase.